We begin with the raw amino-acid sequence, 126 residues long: Aspartate 1-decarboxylase (126 aa).

The active-site Schiff-base intermediate with substrate; via pyruvic acid is Ser25. At Ser25 the chain carries Pyruvic acid (Ser). Thr57 is a binding site for substrate. The Proton donor role is filled by Tyr58. Substrate is bound at residue 73 to 75 (GAA).

The protein belongs to the PanD family. As to quaternary structure, heterooctamer of four alpha and four beta subunits. The cofactor is pyruvate. In terms of processing, is synthesized initially as an inactive proenzyme, which is activated by self-cleavage at a specific serine bond to produce a beta-subunit with a hydroxyl group at its C-terminus and an alpha-subunit with a pyruvoyl group at its N-terminus.

Its subcellular location is the cytoplasm. The enzyme catalyses L-aspartate + H(+) = beta-alanine + CO2. The protein operates within cofactor biosynthesis; (R)-pantothenate biosynthesis; beta-alanine from L-aspartate: step 1/1. Functionally, catalyzes the pyruvoyl-dependent decarboxylation of aspartate to produce beta-alanine. This is Aspartate 1-decarboxylase from Methylococcus capsulatus (strain ATCC 33009 / NCIMB 11132 / Bath).